The chain runs to 108 residues: UPF0060 membrane protein Sputw3181_1172 (108 aa).

4 consecutive transmembrane segments (helical) span residues 3–23, 31–51, 63–83, and 87–107; these read VITT…GCYL, GASA…AWLL, AAYG…VDGI, and RWDL…MFAP.

It belongs to the UPF0060 family.

It is found in the cell inner membrane. This Shewanella sp. (strain W3-18-1) protein is UPF0060 membrane protein Sputw3181_1172.